Reading from the N-terminus, the 376-residue chain is Putative transmembrane protein 183BP (376 aa).

Disordered regions lie at residues 1–20 (MARGPGPLGRPRPDTVAMPK) and 102–127 (AQEENIHERTVSRKKKSKRHKEELDG). A helical transmembrane segment spans residues 300–320 (LNFIFIPIVMGMIFTLFTINV).

Belongs to the TMEM183 family. In terms of tissue distribution, expressed in brain, lung, pancreas, thymus, intestine and blood. Not detected in heart, placenta, liver, muscle, kidney, spleen, prostate, testis, ovary and colon.

It is found in the membrane. This is Putative transmembrane protein 183BP from Homo sapiens (Human).